Consider the following 911-residue polypeptide: MSSSQQSGRANELRTPGRANSSSREAVDSSPLFFPASSPGSTRLTTPRTTARTPLASSPLLFESSSPGPNIPQSSRSHLLSQRNDLFLDSSSQRTPRSTRRGDIHSSVQMSTPSRRREVDPQRPGVSTPSSLLFSGSDALTFSQAHPSSEVADDTVRVIWGTNVSIQESIASFRGFLRGFKKKYRPEYRNELMPPPDAEQLVYIEALRNMRIMGLEILNLDVQDLKHYPPTKKLYHQLYSYPQEIIPIMDQTIKDVMLDLLGTNPPEDVLNDIELKIYKIRPFNLEKCINMRDLNPGDIDKLISIKGLVLRCTPVIPDMKQAFFRCSVCGHCVTVEIDRGRIAEPIKCPREVCGATNAMQLIHNRSEFADKQVIKLQETPDVVPDGQTPHSVSLCVYDELVDSARAGDRIEVTGIFRCVPVRLNPRMRTVKSLFKTYVDVVHIKKQDKRRLGTDPSTLESDIAEDAALQIDEVRKISDEEVEKIQQVSKRDDIYDILSRSLAPSIYEMDDVKKGLLLQLFGGTNKSFHKGASPRYRGDINILMCGDPSTSKSQILKYVHKIAPRGVYTSGKGSSAVGLTAYITRDQDTKQLVLESGALVLSDGGICCIDEFDKMSDATRSILHEVMEQQTVTVAKAGIITTLNARTSILASANPIGSKYNPDLPVTKNIDLPPTLLSRFDLVYLILDRVDETLDRKLANHIVSMYMEDTPEHATDMEVFSVEFLTSYITYARNNINPVISEEAAKELVNAYVGMRKLGEDVRASEKRITATTRQLESMIRLSEAHAKMHLRNVVEVGDVLEAARLIKTAIKDYATDPATGKISLDLIYVNERETLVPEDMVKELANLISNLTVGGKTMLVSQLLTRFREQSSTRLDASDFEACLGALERRGRIKVITSAGHRIVRSIAQTD.

The segment at 1–132 (MSSSQQSGRA…RPGVSTPSSL (132 aa)) is disordered. Phosphoserine is present on residues serine 37, serine 38, and serine 41. Over residues 42–56 (TRLTTPRTTARTPLA) the composition is skewed to low complexity. Polar residues predominate over residues 63–84 (ESSSPGPNIPQSSRSHLLSQRN). Serine 92 is modified (phosphoserine). One can recognise an MCM domain in the interval 493 to 702 (IYDILSRSLA…LDRKLANHIV (210 aa)). Residue 545 to 552 (GDPSTSKS) participates in ATP binding. The Arginine finger motif lies at 677–680 (SRFD).

The protein belongs to the MCM family. In terms of assembly, component of the mcm2-7 complex. The complex forms a toroidal hexameric ring with the proposed subunit order mcm2-mcm6-mcm4-mcm7-mcm3-mcm5. The heterodimers of mcm4/mcm6 and mcm3/mcm5 interact with mcm2 and mcm7.

It is found in the nucleus. It catalyses the reaction ATP + H2O = ADP + phosphate + H(+). Its function is as follows. Acts as a component of the mcm2-7 complex (mcm complex) which is the putative replicative helicase essential for 'once per cell cycle' DNA replication initiation and elongation in eukaryotic cells. The active ATPase sites in the mcm2-7 ring are formed through the interaction surfaces of two neighboring subunits such that a critical structure of a conserved arginine finger motif is provided in trans relative to the ATP-binding site of the Walker A box of the adjacent subunit. The six ATPase active sites, however, are likely to contribute differentially to the complex helicase activity. Required for S phase execution. The polypeptide is DNA replication licensing factor mcm4 (mcm4) (Schizosaccharomyces pombe (strain 972 / ATCC 24843) (Fission yeast)).